The chain runs to 739 residues: BEL1-like homeodomain protein 2 (739 aa).

Disordered regions lie at residues 23-73 (SQDY…ESSV) and 143-222 (LMNP…NSQT). A compositionally biased stretch (polar residues) spans 41 to 58 (NFSNGFDRSDSPNLTTQQ). Residues 145–155 (NPPPPQQPPSP) are compositionally biased toward pro residues. A compositionally biased stretch (low complexity) spans 179–190 (TNTTHHQNYTNH). Residues 316–332 (SRYTTAAQELLEEFCSV) are SR/KY domain. The disordered stretch occupies residues 341-378 (KLGNSSNPNTCGGDGGGSSPSSAGANKEHPPLSASDRI). A BELL domain region spans residues 376–447 (DRIEHQRRKV…CLKDAVAAQL (72 aa)). Residues 498–560 (AWRPQRGLPE…NARVRLWKPM (63 aa)) constitute a DNA-binding region (homeobox). Residues 567–627 (QESKEREREE…TAPDASDADA (61 aa)) are disordered. The segment covering 576-585 (EELEENEEDQ) has biased composition (acidic residues). Positions 586–596 (ETKNSNDDKST) are enriched in basic and acidic residues. Residues 597–627 (KSNNNESNFTAVRTTSQTPTTTAPDASDADA) are compositionally biased toward low complexity.

The protein belongs to the TALE/BELL homeobox family. As to quaternary structure, may form heterodimeric complexes with TALE/KNOX proteins STM, KNAT1/BP, KNAT2 and KNAT5. Interacts with OFP1, OFP2, OFP4 and OFP5. Interacts with KNATM, isoform KNATM-B. In terms of tissue distribution, expressed in lateral organs.

The protein localises to the nucleus. Transcription factor that establishes leaf shape by repressing growth in specific subdomains of the leaf. Negatively regulates knox homeobox gene KNAT1/BP expression. The polypeptide is BEL1-like homeodomain protein 2 (BLH2) (Arabidopsis thaliana (Mouse-ear cress)).